Here is a 199-residue protein sequence, read N- to C-terminus: uncharacterized protein (199 aa).

The next 3 helical transmembrane spans lie at 27-47 (LIKI…PILA), 55-75 (LLTL…VAAL), and 172-192 (LLLL…VLLL).

It localises to the cell membrane. This is an uncharacterized protein from Synechocystis sp. (strain ATCC 27184 / PCC 6803 / Kazusa).